The sequence spans 312 residues: Olfactory receptor-like protein COR4 (312 aa).

The Extracellular segment spans residues 1–26; that stretch reads MASGNCTTPTTFILSGLTDNPGLQMP. N5 carries an N-linked (GlcNAc...) asparagine glycan. Residues 27–49 form a helical membrane-spanning segment; the sequence is LFMVFLAIYTITLLTNLGLIALI. The Cytoplasmic segment spans residues 50–57; that stretch reads SVDLHLQT. A helical transmembrane segment spans residues 58-79; the sequence is PMYIFLQNLSFTDAAYSTVITP. At 80–100 the chain is on the extracellular side; it reads KMLATFLEERKTISYIGCILQ. Cysteines 97 and 179 form a disulfide. The chain crosses the membrane as a helical span at residues 101–120; that stretch reads YFSFVLLTVTESLLLAVMAY. Residues 121–139 are Cytoplasmic-facing; it reads DRYVAICKPLLYPSIMTKA. A helical membrane pass occupies residues 140–164; it reads VCWRLVKGLYSLAFLNSLVHTSGLL. Over 165–205 the chain is Extracellular; that stretch reads KLSFCSSNVVNHFFCDNSPLFQISSSSTTLNELLVFIFGSL. The helical transmembrane segment at 206–226 threads the bilayer; it reads FAMSSIITILISYVFIILTVV. Residues 227-239 are Cytoplasmic-facing; that stretch reads RIRSKDGKYKAFS. Residues 240–260 form a helical membrane-spanning segment; it reads TCTSHLMAVSLFHGTVIFMYL. Over 261 to 271 the chain is Extracellular; sequence RPVKLFSLDTD. Residues 272-292 form a helical membrane-spanning segment; that stretch reads KIASLFYTVVIPMLNPLIYSW. The Cytoplasmic portion of the chain corresponds to 293 to 312; it reads RNKEVKDALRRVIATNVWIH.

This sequence belongs to the G-protein coupled receptor 1 family.

The protein localises to the cell membrane. Its function is as follows. Odorant receptor. This Gallus gallus (Chicken) protein is Olfactory receptor-like protein COR4 (COR4).